Consider the following 479-residue polypeptide: Glutamate--tRNA ligase 2 (479 aa).

A 'HIGH' region motif is present at residues 10–20 (PSPTGSLHIGG). The 'KMSKS' region motif lies at 243 to 247 (KLSKR). Lys-246 provides a ligand contact to ATP.

The protein belongs to the class-I aminoacyl-tRNA synthetase family. Glutamate--tRNA ligase type 1 subfamily. In terms of assembly, monomer.

The protein localises to the cytoplasm. It carries out the reaction tRNA(Glu) + L-glutamate + ATP = L-glutamyl-tRNA(Glu) + AMP + diphosphate. Catalyzes the attachment of glutamate to tRNA(Glu) in a two-step reaction: glutamate is first activated by ATP to form Glu-AMP and then transferred to the acceptor end of tRNA(Glu). This is Glutamate--tRNA ligase 2 from Thermoanaerobacter pseudethanolicus (strain ATCC 33223 / 39E) (Clostridium thermohydrosulfuricum).